The chain runs to 576 residues: Beta-bisabolene synthase (576 aa).

(2E,6E)-farnesyl diphosphate contacts are provided by Arg286, Asp323, Asp327, Arg466, and Asn469. Positions 323 and 327 each coordinate Mg(2+). The short motif at 323-327 is the DDXXD motif element; it reads DDVYD. Residues Asn469, Thr473, and Glu477 each coordinate Mg(2+).

This sequence belongs to the terpene synthase family. Tpsb subfamily. Mg(2+) serves as cofactor. The cofactor is Mn(2+).

Functionally, produces almost exclusively beta-bisabolene and only traces of alpha-bisabolol from (2E,6E)-farnesyl diphosphate in fragrance biosynthesis. The polypeptide is Beta-bisabolene synthase (Santalum austrocaledonicum (Sandalwood)).